Consider the following 262-residue polypeptide: 2-keto-4-pentenoate hydratase (262 aa).

The protein belongs to the hydratase/decarboxylase family. MhpD subfamily. A divalent metal cation serves as cofactor.

The catalysed reaction is (S)-4-hydroxy-2-oxopentanoate = (2Z)-2-hydroxypenta-2,4-dienoate + H2O. It functions in the pathway aromatic compound metabolism; 3-phenylpropanoate degradation. In terms of biological role, catalyzes the conversion of 2-hydroxypentadienoic acid (enolic form of 2-oxopent-4-enoate) to 4-hydroxy-2-ketopentanoic acid. The chain is 2-keto-4-pentenoate hydratase from Burkholderia vietnamiensis (strain G4 / LMG 22486) (Burkholderia cepacia (strain R1808)).